The sequence spans 232 residues: Orotidine 5'-phosphate decarboxylase (232 aa).

Residues Asp-14, Lys-36, 63 to 72 (DLKFHDIPNT), Thr-122, Arg-183, Gln-192, Gly-212, and Arg-213 each bind substrate. Lys-65 serves as the catalytic Proton donor.

Belongs to the OMP decarboxylase family. Type 1 subfamily. Homodimer.

It carries out the reaction orotidine 5'-phosphate + H(+) = UMP + CO2. Its pathway is pyrimidine metabolism; UMP biosynthesis via de novo pathway; UMP from orotate: step 2/2. Catalyzes the decarboxylation of orotidine 5'-monophosphate (OMP) to uridine 5'-monophosphate (UMP). The protein is Orotidine 5'-phosphate decarboxylase of Psychrobacter arcticus (strain DSM 17307 / VKM B-2377 / 273-4).